Here is a 727-residue protein sequence, read N- to C-terminus: NADH-ubiquinone oxidoreductase 75 kDa subunit, mitochondrial (727 aa).

A mitochondrion-targeting transit peptide spans 1–23 (MLRIPVRKALVGLSKSPKGCVRT). The 2Fe-2S ferredoxin-type domain maps to 30–108 (NLIEVFVDGQ…GWNILTNSEK (79 aa)). The [2Fe-2S] cluster site is built by C64, C75, and C78. K84 carries the N6-acetyllysine modification. C92 is a binding site for [2Fe-2S] cluster. The 4Fe-4S His(Cys)3-ligated-type domain occupies 108-147 (KSKKAREGVMELLLANHPLDCPICDQGGECDLQDQSMMFG). Positions 124, 128, 131, 137, 176, 179, 182, and 226 each coordinate [4Fe-4S] cluster. Positions 245 to 301 (TRKTESIDVMDAVGSNIVVSTRTGEVMRILPRMHEDINEEWISDKTRFAYDGLKRQR) constitute a 4Fe-4S Mo/W bis-MGD-type domain. K467, K499, and K709 each carry N6-acetyllysine.

The protein belongs to the complex I 75 kDa subunit family. In terms of assembly, core subunit of respiratory chain NADH dehydrogenase (Complex I) which is composed of 45 different subunits. This is the largest subunit of complex I and it is a component of the iron-sulfur (IP) fragment of the enzyme. Complex I associates with ubiquinol-cytochrome reductase complex (Complex III) to form supercomplexes. Interacts with MDM2 and AKAP1. It depends on [2Fe-2S] cluster as a cofactor. [4Fe-4S] cluster is required as a cofactor.

The protein localises to the mitochondrion inner membrane. The enzyme catalyses a ubiquinone + NADH + 5 H(+)(in) = a ubiquinol + NAD(+) + 4 H(+)(out). Functionally, core subunit of the mitochondrial membrane respiratory chain NADH dehydrogenase (Complex I) which catalyzes electron transfer from NADH through the respiratory chain, using ubiquinone as an electron acceptor. Essential for catalysing the entry and efficient transfer of electrons within complex I. Plays a key role in the assembly and stability of complex I and participates in the association of complex I with ubiquinol-cytochrome reductase complex (Complex III) to form supercomplexes. The sequence is that of NADH-ubiquinone oxidoreductase 75 kDa subunit, mitochondrial (NDUFS1) from Pongo abelii (Sumatran orangutan).